Consider the following 1500-residue polypeptide: Carbamoyl-phosphate synthase [ammonia], mitochondrial (1500 aa).

The transit peptide at 1-38 directs the protein to the mitochondrion; the sequence is MTRILTACKVVKTLKSGFGLANVTSKRQWDFSRPGIRL. The segment at 39–218 is anthranilate phosphoribosyltransferase homolog; sequence LSVKAQTAHI…VKVFGKGNPT (180 aa). K55, K57, and K119 each carry N6-acetyllysine; alternate. K55 carries the post-translational modification N6-glutaryllysine; alternate. An N6-succinyllysine; alternate mark is found at K55, K57, and K119. Phosphoserine is present on S148. N6-acetyllysine; alternate is present on residues K157 and K171. Position 157 is an N6-succinyllysine; alternate (K157). An N6-glutaryllysine; alternate modification is found at K171. N6-glutaryllysine is present on K176. Residue K182 is modified to N6-acetyllysine. S189 is subject to Phosphoserine. K197 bears the N6-acetyllysine mark. N6-acetyllysine; alternate is present on residues K207, K210, K214, K219, and K228. K207, K210, K214, K219, and K228 each carry N6-glutaryllysine; alternate. K207 is subject to N6-succinyllysine; alternate. K214 carries the N6-succinyllysine; alternate modification. The 186-residue stretch at 219–404 folds into the Glutamine amidotransferase type-1 domain; sequence KVVAVDCGIK…FSLIKKGKGT (186 aa). An N6-glutaryllysine modification is found at K237. K279 carries the N6-acetyllysine modification. An N6-acetyllysine; alternate mark is found at K280, K287, K307, and K310. K280 bears the N6-glutaryllysine; alternate mark. Residues K287 and K307 each carry the N6-succinyllysine; alternate modification. N6-glutaryllysine; alternate occurs at positions 307 and 310. K400 carries the post-translational modification N6-succinyllysine. N6-glutaryllysine; alternate is present on residues K402, K412, K453, and K458. N6-succinyllysine; alternate is present on residues K402 and K412. 6 positions are modified to N6-acetyllysine; alternate: K412, K453, K458, K522, K527, and K532. K458, K522, and K527 each carry N6-succinyllysine; alternate. K527 and K532 each carry N6-glutaryllysine; alternate. Residue S537 is modified to Phosphoserine; alternate. S537 carries an O-linked (GlcNAc) serine; alternate glycan. Position 540 is a phosphoserine (S540). In terms of domain architecture, ATP-grasp 1 spans 551–743; sequence SDKLNEINEK…LAFIAAKIAL (193 aa). 2 positions are modified to N6-acetyllysine; alternate: K553 and K560. Residue K553 is modified to N6-glutaryllysine; alternate. N6-succinyllysine; alternate occurs at positions 553 and 560. Phosphoserine is present on S569. N6-acetyllysine; alternate is present on residues K575, K603, and K612. Residues K575, K603, and K612 each carry the N6-succinyllysine; alternate modification. K630 carries the N6-acetyllysine modification. K728 carries the post-translational modification N6-glutaryllysine. N6-acetyllysine; alternate is present on residues K751, K757, K772, K793, K811, K831, K841, and K856. N6-succinyllysine; alternate occurs at positions 751 and 757. K757, K772, K793, and K811 each carry N6-glutaryllysine; alternate. Position 793 is an N6-succinyllysine; alternate (K793). An N6-succinyllysine; alternate modification is found at K831. K841 and K856 each carry N6-glutaryllysine; alternate. Position 869 is an N6-glutaryllysine (K869). K875, K889, and K892 each carry N6-acetyllysine; alternate. K875, K889, and K892 each carry N6-glutaryllysine; alternate. N6-succinyllysine; alternate is present on residues K875, K889, and K892. Phosphoserine is present on residues S896 and S898. N6-acetyllysine; alternate is present on residues K908, K915, and K919. N6-glutaryllysine; alternate occurs at positions 908, 915, and 919. N6-succinyllysine; alternate occurs at positions 915 and 919. K935 carries the N6-acetyllysine modification. S1036 is modified (phosphoserine). N6-acetyllysine; alternate is present on K1074. An N6-glutaryllysine; alternate modification is found at K1074. K1074 is subject to N6-succinyllysine; alternate. Phosphoserine occurs at positions 1079, 1090, and 1093. Residues 1093–1284 form the ATP-grasp 2 domain; the sequence is SAVLDELKVA…FIDVATKVMI (192 aa). The residue at position 1100 (K1100) is an N6-acetyllysine; alternate. Residue K1100 is modified to N6-succinyllysine; alternate. K1149 carries the post-translational modification N6-succinyllysine. Residues K1168 and K1183 each carry the N6-acetyllysine; alternate modification. 2 positions are modified to N6-glutaryllysine; alternate: K1168 and K1183. An N6-succinyllysine; alternate mark is found at K1168 and K1183. At S1203 the chain carries Phosphoserine. K1222 carries the N6-acetyllysine modification. An N6-glutaryllysine modification is found at K1224. An N6-acetyllysine; alternate mark is found at K1232, K1269, and K1291. 3 positions are modified to N6-succinyllysine; alternate: K1232, K1269, and K1291. S1331 carries an O-linked (GlcNAc) serine glycan. An O-linked (GlcNAc) threonine glycan is attached at T1332. An MGS-like domain is found at 1355–1500; that stretch reads FKIPQKGILI…YRQYSAGKAA (146 aa). N6-acetyllysine; alternate is present on K1356. Residues K1356 and K1360 each carry the N6-glutaryllysine; alternate modification. K1356 and K1360 each carry N6-succinyllysine; alternate. The N-acetyl-L-glutamate site is built by T1391, T1394, and W1410. A phosphoserine mark is found at S1419 and S1431. N-acetyl-L-glutamate contacts are provided by N1437 and N1440. An N6-acetyllysine; alternate modification is found at K1444. K1444 is subject to N6-succinyllysine; alternate. N1449 serves as a coordination point for N-acetyl-L-glutamate. An N6-acetyllysine; alternate mark is found at K1471, K1479, and K1486. K1471, K1479, and K1486 each carry N6-succinyllysine; alternate. K1479 and K1486 each carry N6-glutaryllysine; alternate.

Can form homooligomers (monomers as predominant form and dimers). 50% of the mature protein that was isolated had Leu-39 as its N-terminal residue and 50% had Ser-40 suggesting two adjacent processing sites. However, the possibility of proteolytic removal of Leu-39 during the isolation of the enzyme cannot be excluded. Undergoes proteolytic cleavage in the C-terminal region corresponding to the loss of approximately 12 AA residues from the C-terminus. In terms of processing, succinylated at Lys-287 and Lys-1291. Desuccinylated at Lys-1291 by SIRT5, leading to activation. Post-translationally, glutarylated. Glutarylation levels increase during fasting. Deglutarylated by SIRT5 at Lys-55, Lys-219, Lys-412, Lys-889, Lys-892, Lys-915, Lys-1360 and Lys-1486, leading to activation. In terms of tissue distribution, primarily in the liver and small intestine.

Its subcellular location is the mitochondrion. It localises to the nucleus. It is found in the nucleolus. The protein localises to the cell membrane. It catalyses the reaction hydrogencarbonate + NH4(+) + 2 ATP = carbamoyl phosphate + 2 ADP + phosphate + 2 H(+). Requires N-acetyl-L-glutamate (NAG) as an allosteric activator. N-acetyl-L-beta-phenylglutamate (Phe-NAG) can also activate CPSase I, but with an activation constant that is 2-fold higher than that for NAG. Functionally, involved in the urea cycle of ureotelic animals where the enzyme plays an important role in removing excess ammonia from the cell. The sequence is that of Carbamoyl-phosphate synthase [ammonia], mitochondrial (Cps1) from Rattus norvegicus (Rat).